The following is a 526-amino-acid chain: Rho guanine nucleotide exchange factor 3 (526 aa).

Residues 20 to 40 (ELPPASGPAKDAEEPSNKRVK) form a disordered region. Phosphoserine is present on residues Ser-47 and Ser-70. The region spanning 122–304 (KRQEAIFELS…QGIVAEINTK (183 aa)) is the DH domain. One can recognise a PH domain in the interval 291 to 449 (INIIQGIVAE…WLNCIRQAKE (159 aa)). The tract at residues 464–526 (EGSFLNPTTG…GNSRHGESNV (63 aa)) is disordered. The segment covering 466–475 (SFLNPTTGSR) has biased composition (polar residues).

Interacts with RHOA and RHOB. In terms of tissue distribution, widely expressed. Highest levels are found in adult brain and skeletal muscle. Lower levels are found in heart and kidney.

The protein resides in the cytoplasm. Functionally, acts as a guanine nucleotide exchange factor (GEF) for RhoA and RhoB GTPases. In Homo sapiens (Human), this protein is Rho guanine nucleotide exchange factor 3 (ARHGEF3).